The sequence spans 208 residues: Small ribosomal subunit protein uS4 (208 aa).

The disordered stretch occupies residues 31 to 50; sequence SALDKRAYGPGQHGQRRTKT. One can recognise an S4 RNA-binding domain in the interval 98–161; sequence RRLDNVVYRM…KSNPQVVRAM (64 aa).

It belongs to the universal ribosomal protein uS4 family. Part of the 30S ribosomal subunit. Contacts protein S5. The interaction surface between S4 and S5 is involved in control of translational fidelity.

In terms of biological role, one of the primary rRNA binding proteins, it binds directly to 16S rRNA where it nucleates assembly of the body of the 30S subunit. With S5 and S12 plays an important role in translational accuracy. In Helicobacter pylori (strain J99 / ATCC 700824) (Campylobacter pylori J99), this protein is Small ribosomal subunit protein uS4.